Reading from the N-terminus, the 416-residue chain is Alpha-1,3/1,6-mannosyltransferase ALG2 (416 aa).

Over 1–84 (MAEEQGRERD…LPRGLGWGGR (84 aa)) the chain is Cytoplasmic. The helical intramembrane region spans 85–105 (GAAVCAYVRMVFLALYVLFLA). Residues 106–416 (DEEFDVVVCD…LYRYVTKLLV (311 aa)) lie on the Cytoplasmic side of the membrane.

The protein belongs to the glycosyltransferase group 1 family. Glycosyltransferase 4 subfamily.

The protein localises to the endoplasmic reticulum membrane. The enzyme catalyses a beta-D-Man-(1-&gt;4)-beta-D-GlcNAc-(1-&gt;4)-alpha-D-GlcNAc-diphospho-di-trans,poly-cis-dolichol + GDP-alpha-D-mannose = an alpha-D-Man-(1-&gt;3)-beta-D-Man-(1-&gt;4)-beta-D-GlcNAc-(1-&gt;4)-alpha-D-GlcNAc-diphospho-di-trans,poly-cis-dolichol + GDP + H(+). It carries out the reaction an alpha-D-Man-(1-&gt;3)-beta-D-Man-(1-&gt;4)-beta-D-GlcNAc-(1-&gt;4)-alpha-D-GlcNAc-diphospho-di-trans,poly-cis-dolichol + GDP-alpha-D-mannose = an alpha-D-Man-(1-&gt;3)-[alpha-D-Man-(1-&gt;6)]-beta-D-Man-(1-&gt;4)-beta-D-GlcNAc-(1-&gt;4)-alpha-D-GlcNAc-diphospho-di-trans,poly-cis-dolichol + GDP + H(+). The catalysed reaction is a beta-D-Man-(1-&gt;4)-beta-D-GlcNAc-(1-&gt;4)-alpha-D-GlcNAc-diphospho-di-trans,poly-cis-dolichol + GDP-alpha-D-mannose = an alpha-D-Man-(1-&gt;6)-beta-D-Man-(1-&gt;4)-beta-D-GlcNAc-(1-&gt;4)-alpha-D-GlcNAc-diphospho-di-trans,poly-cis-dolichol + GDP + H(+). It catalyses the reaction an alpha-D-Man-(1-&gt;6)-beta-D-Man-(1-&gt;4)-beta-D-GlcNAc-(1-&gt;4)-alpha-D-GlcNAc-diphospho-di-trans,poly-cis-dolichol + GDP-alpha-D-mannose = an alpha-D-Man-(1-&gt;3)-[alpha-D-Man-(1-&gt;6)]-beta-D-Man-(1-&gt;4)-beta-D-GlcNAc-(1-&gt;4)-alpha-D-GlcNAc-diphospho-di-trans,poly-cis-dolichol + GDP + H(+). It functions in the pathway protein modification; protein glycosylation. In terms of biological role, mannosyltransferase that operates in the biosynthetic pathway of dolichol-linked oligosaccharides, the glycan precursors employed in protein asparagine (N)-glycosylation. The assembly of dolichol-linked oligosaccharides begins on the cytosolic side of the endoplasmic reticulum membrane and finishes in its lumen. The sequential addition of sugars to dolichol pyrophosphate produces dolichol-linked oligosaccharides containing fourteen sugars, including two GlcNAcs, nine mannoses and three glucoses. Once assembled, the oligosaccharide is transferred from the lipid to nascent proteins by oligosaccharyltransferases. Catalyzes, on the cytoplasmic face of the endoplasmic reticulum, the addition of the second and third mannose residues to the dolichol-linked oligosaccharide chain, to produce Man3GlcNAc(2)-PP-dolichol core oligosaccharide. Man3GlcNAc(2)-PP-dolichol is a substrate for ALG11, the following enzyme in the biosynthetic pathway. While both alpha 1,3 and alpha 1,6 linkages are possible, the sequential addition of alpha 1,3 followed by alpha 1,6 is probably the preferred route. The polypeptide is Alpha-1,3/1,6-mannosyltransferase ALG2 (ALG2) (Homo sapiens (Human)).